Here is a 496-residue protein sequence, read N- to C-terminus: Alpha-amylase (496 aa).

Residues cysteine 29 and cysteine 85 are joined by a disulfide bond. 3 residues coordinate Ca(2+): asparagine 99, arginine 155, and aspartate 164. Position 192 (arginine 192) interacts with chloride. The active-site Nucleophile is aspartate 194. Histidine 198 serves as a coordination point for Ca(2+). Catalysis depends on glutamate 230, which acts as the Proton donor. Arginine 332 provides a ligand contact to chloride. Cystine bridges form between cysteine 374-cysteine 380 and cysteine 448-cysteine 460.

It belongs to the glycosyl hydrolase 13 family. In terms of assembly, monomer. Ca(2+) is required as a cofactor. The cofactor is chloride. In terms of processing, disulfide bonds are present.

It localises to the secreted. The catalysed reaction is Endohydrolysis of (1-&gt;4)-alpha-D-glucosidic linkages in polysaccharides containing three or more (1-&gt;4)-alpha-linked D-glucose units.. Inhibited by alpha-amylase inhibitors from wheat and rye. The most effective inhibitors are the wheat tetrameric alpha-amylase inhibitor (WTAI) and the rye dimeric alpha-amylase inhibitor (RDAI-1). Not inhibited by alpha-amylase inhibitor from barley. Aids in the digestion of starch and glycogen derived from food, such as skin scales, fungi and bacteria. The polypeptide is Alpha-amylase (Dermatophagoides pteronyssinus (European house dust mite)).